The following is a 419-amino-acid chain: L-rhamnose isomerase (419 aa).

Histidine 262, aspartate 294, and aspartate 296 together coordinate Mn(2+).

This sequence belongs to the rhamnose isomerase family. In terms of assembly, homotetramer. Requires Mn(2+) as cofactor.

It localises to the cytoplasm. The enzyme catalyses L-rhamnopyranose = L-rhamnulose. The protein operates within carbohydrate degradation; L-rhamnose degradation; glycerone phosphate from L-rhamnose: step 1/3. In terms of biological role, catalyzes the interconversion of L-rhamnose and L-rhamnulose. The polypeptide is L-rhamnose isomerase (Escherichia coli (strain K12 / MC4100 / BW2952)).